Reading from the N-terminus, the 334-residue chain is Biotin synthase (334 aa).

Positions 41–260 constitute a Radical SAM core domain; sequence TRLETASLLS…IAVARIMMPR (220 aa). [4Fe-4S] cluster-binding residues include C56, C60, and C63. 4 residues coordinate [2Fe-2S] cluster: C100, C131, C191, and R264.

The protein belongs to the radical SAM superfamily. Biotin synthase family. Homodimer. It depends on [4Fe-4S] cluster as a cofactor. Requires [2Fe-2S] cluster as cofactor.

The catalysed reaction is (4R,5S)-dethiobiotin + (sulfur carrier)-SH + 2 reduced [2Fe-2S]-[ferredoxin] + 2 S-adenosyl-L-methionine = (sulfur carrier)-H + biotin + 2 5'-deoxyadenosine + 2 L-methionine + 2 oxidized [2Fe-2S]-[ferredoxin]. It functions in the pathway cofactor biosynthesis; biotin biosynthesis; biotin from 7,8-diaminononanoate: step 2/2. Catalyzes the conversion of dethiobiotin (DTB) to biotin by the insertion of a sulfur atom into dethiobiotin via a radical-based mechanism. The sequence is that of Biotin synthase from Bradyrhizobium sp. (strain ORS 278).